A 170-amino-acid polypeptide reads, in one-letter code: Putative pre-16S rRNA nuclease (170 aa).

A compositionally biased stretch (basic and acidic residues) spans 1 to 18; sequence MGTDDRLPDRPGADDPGR. The disordered stretch occupies residues 1-22; sequence MGTDDRLPDRPGADDPGRGRRI.

This sequence belongs to the YqgF nuclease family.

Its subcellular location is the cytoplasm. In terms of biological role, could be a nuclease involved in processing of the 5'-end of pre-16S rRNA. This Mycolicibacterium smegmatis (strain ATCC 700084 / mc(2)155) (Mycobacterium smegmatis) protein is Putative pre-16S rRNA nuclease.